A 577-amino-acid polypeptide reads, in one-letter code: Sensory neuron membrane protein 2 (577 aa).

Residues 1 to 6 (MVQCTL) lie on the Cytoplasmic side of the membrane. A helical membrane pass occupies residues 7–27 (IWAGIGAMMAVSGALLGWVVF). Over 28 to 519 (PRAVHEKVIE…LMKVLSLLDV (492 aa)) the chain is Extracellular. N-linked (GlcNAc...) asparagine glycans are attached at residues Asn66, Asn161, Asn271, and Asn307. Intrachain disulfides connect Cys316–Cys384, Cys345–Cys411, and Cys386–Cys400. The helical transmembrane segment at 520 to 540 (VQWVLIGVGLLLAVLMPTVYF) threads the bilayer. The Cytoplasmic portion of the chain corresponds to 541-577 (VKRCRGEGSRTVSPAVTATTSAASLSTVAGVTGDRSK).

It belongs to the CD36 family.

It is found in the cell membrane. Its function is as follows. Plays an olfactory role that is not restricted to pheromone sensitivity. The polypeptide is Sensory neuron membrane protein 2 (Anopheles gambiae (African malaria mosquito)).